The primary structure comprises 832 residues: Mechanosensitive cation channel TMEM63B (832 aa).

Over 1 to 40 (MLPFLLATLGTAALNSSNPKDYCYSARIRSTVLQGLPFGG) the chain is Extracellular. The chain crosses the membrane as a helical span at residues 41 to 65 (VPTVLALDFMCFLALLFLFSILRKV). C51 is lipidated: S-palmitoyl cysteine. The Cytoplasmic segment spans residues 66–145 (AWDYGRLALV…KDDEIRDKCG (80 aa)). The Mediates endoplasmic reticulum retention signature appears at 86–88 (RER). S111, S113, S114, and S115 each carry phosphoserine. The S-palmitoyl cysteine moiety is linked to residue C126. Residues 146–178 (GDAVHYLSFQRHIIGLLVVVGVLSVGIVLPVNF) form a helical membrane-spanning segment. The Extracellular portion of the chain corresponds to 179–202 (SGDLLENNAYSFGRTTIANLKSGN). Residues 203–227 (NLLWLHTSFAFLYLLLTVYSMRRHT) traverse the membrane as a helical segment. The Cytoplasmic portion of the chain corresponds to 228 to 427 (SKMRYKEDDL…IYWEHLSIRG (200 aa)). The intracellular linker IL2; confers mechanosensitivity stretch occupies residues 231 to 426 (RYKEDDLVKR…NIYWEHLSIR (196 aa)). S-palmitoyl cysteine attachment occurs at residues C382 and C398. The chain crosses the membrane as a helical span at residues 428-457 (FIWWLRCLVINVVLFILLFFLTTPAIIITT). Residues 458–472 (MDKFNVTKPVEYLNN) lie on the Extracellular side of the membrane. N-linked (GlcNAc...) asparagine glycosylation occurs at N462. The helical transmembrane segment at 473 to 502 (PIITQFFPTLLLWCFSALLPTIVYYSAFFE) threads the bilayer. Over 503–506 (AHWT) the chain is Cytoplasmic. Residues 507–543 (RSGENRTTMHKCYTFLIFMVLLLPSLGLSSLDLFFRW) form a helical membrane-spanning segment. Topologically, residues 544-566 (LFDKKFLAEAAIRFECVFLPDNG) are extracellular. Residues 567-599 (AFFVNYVIASAFIGNAMDLLRIPGLLMYMIRLC) form a helical membrane-spanning segment. Positions 567 to 599 (AFFVNYVIASAFIGNAMDLLRIPGLLMYMIRLC) are gating helix. At 600–619 (LARSAAERRNVKRHQAYEFQ) the chain is on the cytoplasmic side. Residues 620–638 (FGAAYAWMMCVFTVVMTYS) traverse the membrane as a helical segment. Over 639-641 (ITC) the chain is Extracellular. The chain crosses the membrane as a helical span at residues 642 to 666 (PIIVPFGLMYMLLKHLVDRYNLYYA). Residues 667 to 673 (YLPAKLD) lie on the Cytoplasmic side of the membrane. The helical transmembrane segment at 674 to 702 (KKIHSGAVNQVVAAPILCLFWLLFFSTMR) threads the bilayer. Residues 703-707 (TGFLA) are Extracellular-facing. The chain crosses the membrane as a helical span at residues 708–728 (PTSMFTFVVLVITIVICLCHV). 2 S-palmitoyl cysteine lipidation sites follow: C726 and C729. Residues 729–832 (CFGHFKYLSA…DSLIENEIHQ (104 aa)) lie on the Cytoplasmic side of the membrane. Disordered regions lie at residues 748-767 (TDAV…AVPK) and 776-818 (LQDS…DTDF). The segment covering 749 to 758 (DAVSSRSNGR) has biased composition (polar residues). A compositionally biased stretch (low complexity) spans 789 to 801 (PGSSGDEPPSSSS).

Belongs to the CSC1 (TC 1.A.17) family. Monomer. Interacts with SLC19A2; interaction is required for the phospholipid scramblase activity. Post-translationally, palmitoylation is required for localization to the plasma membrane and stability. As to expression, expressed in cochlear hair cells (at protein level). Highly expressed in the subfornical organ of the brain. Expressed in small intestine. Brain-specific.

The protein localises to the cell membrane. It is found in the endoplasmic reticulum membrane. Its subcellular location is the lysosome membrane. It localises to the early endosome membrane. It catalyses the reaction Ca(2+)(in) = Ca(2+)(out). It carries out the reaction Mg(2+)(in) = Mg(2+)(out). The catalysed reaction is K(+)(in) = K(+)(out). The enzyme catalyses Na(+)(in) = Na(+)(out). It catalyses the reaction Cs(+)(in) = Cs(+)(out). It carries out the reaction a 1,2-diacyl-sn-glycero-3-phosphocholine(in) = a 1,2-diacyl-sn-glycero-3-phosphocholine(out). The catalysed reaction is a sphingomyelin(in) = a sphingomyelin(out). Functionally, mechanosensitive cation channel with low conductance and high activation threshold. Osmosensitive cation channel preferentially activated by hypotonic stress. Also acts as a phospholipid scramblase in response to changes in membrane structure: upon changes in membrane curvature and thickness, alters its conformation and translocates phospholipids, such as phosphatidylcholine and sphingomyelin, thereby controlling plasma membrane lipid distribution. Forms a heterodimer with SLC19A2, which mediates phospholipid scramblase activity following Ca(2+) stimulation. Expressed in excitatory neurons of the subfornical organ and functions as a thirst receptor that mediates neuronal response to hyperosmolality to drive thirst and drinking behavior. Facilitates intestinal motility by promoting proliferation of intestinal stem cells. Essential for the baby's first breath and respiration throughout life. Upon lung inflation conducts cation currents in alveolar type 1 and 2 cells triggering lamellar body exocytosis and surfactant secretion into airspace. Acts as an osmosensor in cochlear outer hair cells (OHCs) where it mediates calcium influx and regulatory volume decrease response. Required for the maintenance of OHC morphology, OHC survival and normal hearing. Its function is as follows. Brain-specific osmosensitive calcium channel isoform. The polypeptide is Mechanosensitive cation channel TMEM63B (Mus musculus (Mouse)).